The following is a 680-amino-acid chain: Cytosolic endo-beta-N-acetylglucosaminidase 1 (680 aa).

The segment covering 1–15 (MSVAPPAPSPPPFDP) has biased composition (pro residues). Residues 1 to 21 (MSVAPPAPSPPPFDPTKPSTP) are disordered.

The protein belongs to the glycosyl hydrolase 85 family.

The protein resides in the cytoplasm. The protein localises to the cytosol. It catalyses the reaction an N(4)-(oligosaccharide-(1-&gt;3)-[oligosaccharide-(1-&gt;6)]-beta-D-Man-(1-&gt;4)-beta-D-GlcNAc-(1-&gt;4)-alpha-D-GlcNAc)-L-asparaginyl-[protein] + H2O = an oligosaccharide-(1-&gt;3)-[oligosaccharide-(1-&gt;6)]-beta-D-Man-(1-&gt;4)-D-GlcNAc + N(4)-(N-acetyl-beta-D-glucosaminyl)-L-asparaginyl-[protein]. In terms of biological role, endoglycosidase that releases N-glycans from glycoproteins by cleaving the beta-1,4-glycosidic bond in the N,N'-diacetylchitobiose core. Involved in the production of high-mannose type N-glycans during plant development and fruit maturation. The sequence is that of Cytosolic endo-beta-N-acetylglucosaminidase 1 from Arabidopsis thaliana (Mouse-ear cress).